We begin with the raw amino-acid sequence, 77 residues long: Putative defensin-like protein 120 (77 aa).

Positions Met1–Gly26 are cleaved as a signal peptide. 4 disulfide bridges follow: Cys30–Cys75, Cys39–Cys60, Cys44–Cys69, and Cys48–Cys71.

Belongs to the DEFL family.

The protein resides in the secreted. The protein is Putative defensin-like protein 120 (LCR56) of Arabidopsis thaliana (Mouse-ear cress).